The primary structure comprises 137 residues: Sch210972 biosynthesis cluster protein E (137 aa).

Polar residues predominate over residues 1-12; the sequence is MTKYTSVNSSLP. Residues 1–137 form a disordered region; it reads MTKYTSVNSS…ASTIRPPCCG (137 aa). The segment covering 15–27 has biased composition (low complexity); sequence PRQTTPTRPATQT. Residues 51–71 are compositionally biased toward polar residues; that stretch reads GSLNGSPTLRTTLDTSLSGTR. Positions 94-109 are enriched in basic and acidic residues; the sequence is DEDHPHDPGPDSDAKK.

The protein operates within secondary metabolite biosynthesis. In terms of biological role, part of the gene cluster that mediates the biosynthesis of the tetramic acid Sch210972, a potential anti-HIV fungal natural product that contains a decalin core. The PKS module of cghG together with the enoylreductase cghC catalyze the formation of the polyketide unit which is then conjugated to 4-hydroxyl-4-methyl glutamate (HMG) by the condensation domain of the cghG NRPS module. One unique structural feature of Sch210972 is the tetramic acid motif proposed to be derived from the non-proteinogenic amino acid HMG, by a Dieckmann-type condensation catalyzed by the reductase domain of cghG. The aldolase cghB catalyzes the aldol condensation of 2 molecules of pyruvic acid to yield the intermediate 4-hydroxyl-4-methyl-2-oxoglutarate (HMOG), which can then be stereoselectively transaminated by an unidentified enzyme to form HMG. The Diels-Alderase cghA then uses the Dieckmann product released by cghG as substrate and catalyzes the Diels-Alder cycloaddition to form the decalin ring of Sch210972. CghA also suppresses the nonenzymatic formation of the alternative stereoisomer. The protein is Sch210972 biosynthesis cluster protein E of Chaetomium globosum (strain ATCC 6205 / CBS 148.51 / DSM 1962 / NBRC 6347 / NRRL 1970) (Soil fungus).